The sequence spans 152 residues: D-aminoacyl-tRNA deacylase (152 aa).

The short motif at 138–139 (GP) is the Gly-cisPro motif, important for rejection of L-amino acids element.

It belongs to the DTD family. In terms of assembly, homodimer.

The protein localises to the cytoplasm. The catalysed reaction is glycyl-tRNA(Ala) + H2O = tRNA(Ala) + glycine + H(+). The enzyme catalyses a D-aminoacyl-tRNA + H2O = a tRNA + a D-alpha-amino acid + H(+). An aminoacyl-tRNA editing enzyme that deacylates mischarged D-aminoacyl-tRNAs. Also deacylates mischarged glycyl-tRNA(Ala), protecting cells against glycine mischarging by AlaRS. Acts via tRNA-based rather than protein-based catalysis; rejects L-amino acids rather than detecting D-amino acids in the active site. By recycling D-aminoacyl-tRNA to D-amino acids and free tRNA molecules, this enzyme counteracts the toxicity associated with the formation of D-aminoacyl-tRNA entities in vivo and helps enforce protein L-homochirality. This is D-aminoacyl-tRNA deacylase from Chloroherpeton thalassium (strain ATCC 35110 / GB-78).